Reading from the N-terminus, the 1103-residue chain is MAAGCLLALTLTLFQSGLIGPSSEEPFPSPVTIKSWVDKMQEDLVTLAKTASGVTQLADIYEKYQDLYTVEPNNARQLVEIAARDIEKLLSNRSKALVRLAMEAEKVQAAHQWREDFASNEVVYYNAKDDLDPERNESEPGSQRIKPVFIEDANFGRQISYQHAAVHIPTDIYEGSTIVLNELNWTSALDEVFKRNRDEDPTLLWQVFGSATGLARYYPASPWVDNSRTPNKIDLYDVRRRPWYIQGAASPKDMLILVDVSGSVSGLTLKLIRTSVSEMLETLSDDDFVNVASFNSNAQDVSCFQHLVQANVRNKKVLKDAVNNITAKGITDYKKGFSFAFEQLLNYNVSRANCNKIIMLFTDGGEERAQEIFAKYNKDKKVRVFTFSVGQHNYDRGPIQWMACENKGYYYEIPSIGAIRINTQEYLDVLGRPMVLAGDKAKQVQWTNVYLDALELGLVITGTLPVFNVTGQSENKTNLKNQLILGVMGVDVSLEDIKRLTPRFTLCPNGYYFAIDPNGYVLLHPNLQPKPIGVGIPTINLRKRRPNVQNPKSQEPVTLDFLDAELENEIKVEIRNKMIDGESGEKTFRTLVKSQDERYIDKGNRTYTWTPVNGTDYSLALVLPTYSFYYIKAKLEETITQARYSETLKPDNFEESGYTFIAPREYCNDLKPSDNNTEFLLNFNEFIDRKTPNNPSCNTDLINRILLDAGFTNELVQNYWSKQKNIKGVKARFVVTDGGITRVYPKEAGENWQENPETYEDSFYKRSLDNDNYVFTAPYFNKSGPGAYESGIMVSKAVELYIQGKLLKPAVVGIKIDVNSWIENFTKTSIRDPCAGPVCDCKRNSDVMDCVILDDGGFLLMANHDDYTNQIGRFFGEIDPSMMRHLVNISLYAFNKSYDYQSVCDPGAAPKQGAGHRSAYVPSIADILQIGWWATAAAWSILQQLLLSLTFPRLLEAVEMEEDDFTASLSKQSCITEQTQYFFKNDTKSFSGLLDCGNCSRIFHVEKLMNTNLVFIMVESKGTCPCDTRLLMQAEQTSDGPDPCDMVKQPRYRKGPDVCFDNNVLEDYTDCGGVSGLNPSLWSIFGLQFILLWLVSGSRHYLL.

The N-terminal stretch at 1–24 (MAAGCLLALTLTLFQSGLIGPSSE) is a signal peptide. Residues 25–1073 (EPFPSPVTIK…VLEDYTDCGG (1049 aa)) lie on the Extracellular side of the membrane. N-linked (GlcNAc...) asparagine glycosylation is present at asparagine 92. A Phosphoserine modification is found at serine 119. Residues asparagine 136 and asparagine 184 are each glycosylated (N-linked (GlcNAc...) asparagine). Residues 253–430 (DMLILVDVSG…INTQEYLDVL (178 aa)) enclose the VWFA domain. Residues aspartate 259, serine 261, and serine 263 each coordinate a divalent metal cation. Positions 259–263 (DVSGS) match the MIDAS-like motif motif. N-linked (GlcNAc...) asparagine glycans are attached at residues asparagine 324 and asparagine 348. Cysteine 404 and cysteine 1059 are joined by a disulfide. Residues 446-537 (WTNVYLDALE…QPKPIGVGIP (92 aa)) enclose the Cache domain. N-linked (GlcNAc...) asparagine glycans are attached at residues asparagine 613, asparagine 781, and asparagine 888. The helical transmembrane segment at 1074–1094 (VSGLNPSLWSIFGLQFILLWL) threads the bilayer. Residues 1095–1103 (VSGSRHYLL) lie on the Cytoplasmic side of the membrane.

It belongs to the calcium channel subunit alpha-2/delta family. In terms of assembly, dimer formed of alpha-2-1 and delta-1 chains; disulfide-linked. Voltage-dependent calcium channels are multisubunit complexes, consisting of alpha-1 (CACNA1), alpha-2 (CACNA2D), beta (CACNB) and delta (CACNA2D) subunits in a 1:1:1:1 ratio. Proteolytically processed into subunits alpha-2-1 and delta-1 that are disulfide-linked. Isoform 2A is expressed in skeletal muscle and aorta. Isoform 2B is expressed in brain. Isoform 2C is expressed in heart. Isoform 2D is expressed in heart and smooth muscle. Isoform 2E is expressed in smooth muscle. All five isoforms are expressed in the cardiovascular system.

The protein localises to the membrane. It localises to the cell membrane. Its function is as follows. The alpha-2/delta subunit of voltage-dependent calcium channels regulates calcium current density and activation/inactivation kinetics of the calcium channel. Plays an important role in excitation-contraction coupling. This Mus musculus (Mouse) protein is Voltage-dependent calcium channel subunit alpha-2/delta-1 (Cacna2d1).